Reading from the N-terminus, the 205-residue chain is Cytochrome c biogenesis ATP-binding export protein CcmA 2 (205 aa).

In terms of domain architecture, ABC transporter spans 2–205 (LEARDLYCER…LALTGGGAGL (204 aa)). 34–41 (GGNGAGKT) contributes to the ATP binding site.

This sequence belongs to the ABC transporter superfamily. CcmA exporter (TC 3.A.1.107) family. In terms of assembly, the complex is composed of two ATP-binding proteins (CcmA) and two transmembrane proteins (CcmB).

The protein resides in the cell inner membrane. It catalyses the reaction heme b(in) + ATP + H2O = heme b(out) + ADP + phosphate + H(+). Functionally, part of the ABC transporter complex CcmAB involved in the biogenesis of c-type cytochromes; once thought to export heme, this seems not to be the case, but its exact role is uncertain. Responsible for energy coupling to the transport system. The protein is Cytochrome c biogenesis ATP-binding export protein CcmA 2 of Salmonella typhimurium (strain LT2 / SGSC1412 / ATCC 700720).